A 143-amino-acid polypeptide reads, in one-letter code: Large ribosomal subunit protein uL11 (143 aa).

This sequence belongs to the universal ribosomal protein uL11 family. As to quaternary structure, part of the ribosomal stalk of the 50S ribosomal subunit. Interacts with L10 and the large rRNA to form the base of the stalk. L10 forms an elongated spine to which L12 dimers bind in a sequential fashion forming a multimeric L10(L12)X complex. In terms of processing, one or more lysine residues are methylated.

Its function is as follows. Forms part of the ribosomal stalk which helps the ribosome interact with GTP-bound translation factors. In Pseudomonas putida (strain ATCC 700007 / DSM 6899 / JCM 31910 / BCRC 17059 / LMG 24140 / F1), this protein is Large ribosomal subunit protein uL11.